The chain runs to 308 residues: Mitochondrial import receptor subunit TOM40B (308 aa).

The interval 1-29 is disordered; it reads MGNTLGLAPMGTLPRRSPRREEPLPNPGS. The required for mitochondrial targeting stretch occupies residues 281-308; sequence PLPVTLALGAFLNHWRNRFHCGFSITVG.

The protein belongs to the Tom40 family. As to quaternary structure, forms part of the preprotein translocase of the outer mitochondrial membrane (TOM complex) containing TOMM22, TOMM40, TOMM40L and TOMM70. Interacts with mitochondrial targeting sequences.

Its subcellular location is the mitochondrion outer membrane. Its function is as follows. Potential channel-forming protein implicated in import of protein precursors into mitochondria. This is Mitochondrial import receptor subunit TOM40B (TOMM40L) from Homo sapiens (Human).